A 433-amino-acid chain; its full sequence is N-lysine methyltransferase SMYD2 (433 aa).

The region spanning 7–241 (GGLERFCSPG…PGEEVFTSYI (235 aa)) is the SET domain. 17-19 (KGR) contributes to the S-adenosyl-L-methionine binding site. C52, C55, C65, C68, C74, C78, H86, and C90 together coordinate Zn(2+). The segment at 52-90 (CEFCFARKEGLSKCGRCKQAFYCNVECQREDWPMHKLEC) adopts an MYND-type zinc-finger fold. Residues H137, 206–207 (NH), and 258–260 (YFF) each bind S-adenosyl-L-methionine.

Belongs to the class V-like SAM-binding methyltransferase superfamily. In terms of assembly, interacts with RNA polymerase II and HELZ. Interacts with SIN3A and HDAC1. Interacts (via MYND-type zinc finger) with EPB41L3. Interacts (via SET domain) with p53/TP53. Interacts with RB1 and HSP90AA1.

It localises to the cytoplasm. Its subcellular location is the cytosol. The protein resides in the nucleus. It catalyses the reaction L-lysyl(4)-[histone H3] + 3 S-adenosyl-L-methionine = N(6),N(6),N(6)-trimethyl-L-lysyl(4)-[histone H3] + 3 S-adenosyl-L-homocysteine + 3 H(+). The catalysed reaction is L-lysyl-[protein] + S-adenosyl-L-methionine = N(6)-methyl-L-lysyl-[protein] + S-adenosyl-L-homocysteine + H(+). Functionally, protein-lysine N-methyltransferase that methylates both histones and non-histone proteins, including p53/TP53 and RB1. Specifically trimethylates histone H3 'Lys-4' (H3K4me3) in vivo. The activity requires interaction with HSP90alpha. Shows even higher methyltransferase activity on p53/TP53. Monomethylates 'Lys-370' of p53/TP53, leading to decreased DNA-binding activity and subsequent transcriptional regulation activity of p53/TP53. Monomethylates RB1 at 'Lys-860'. The chain is N-lysine methyltransferase SMYD2 (SMYD2) from Bos taurus (Bovine).